We begin with the raw amino-acid sequence, 446 residues long: MHIVVVSVNHKTADVSLREKLTFSESSIQQALSALINQKSILEGVILSTCNRTEIYAVTDQVHTGRYYVKSFMSEWFDVDIETIKSATDVKVGNEAIHHLFKVITGLDSIVLGETQILGQIRDSFLLAQSEGTTGTVFNKLFKDAITLAKRAHAETDISSKAVSVSYAAVELSKKILGKLENKKILIVGAGEMAELALQNLVGSGATDITVINRTAEKAKSLADQYGGRQVSLQELQCALIESDIVISSTSSQEFIITKPMMQDIMKLRKNKSLVLIDIAVPRDIDPEVNDIDLIFNYDVDDLKGLVDANLAERERAAQVIYTMIDKQVISFVDWINMLGVVPVITALREKALRIQATTMDSIDRKMPNLSERDRKVISKHMKSIINQILKDPISQAKEVSGSENRAEELQFFQEIFNITNEVESIKNNEPEVRRSKNSFVFNPEQ.

Residues 49–52, Ser-109, 114–116, and Gln-120 contribute to the substrate site; these read TCNR and ETQ. The active-site Nucleophile is Cys-50. Residue 189–194 participates in NADP(+) binding; it reads GAGEMA.

This sequence belongs to the glutamyl-tRNA reductase family. As to quaternary structure, homodimer.

It carries out the reaction (S)-4-amino-5-oxopentanoate + tRNA(Glu) + NADP(+) = L-glutamyl-tRNA(Glu) + NADPH + H(+). Its pathway is porphyrin-containing compound metabolism; protoporphyrin-IX biosynthesis; 5-aminolevulinate from L-glutamyl-tRNA(Glu): step 1/2. Its function is as follows. Catalyzes the NADPH-dependent reduction of glutamyl-tRNA(Glu) to glutamate 1-semialdehyde (GSA). The chain is Glutamyl-tRNA reductase from Macrococcus caseolyticus (strain JCSC5402) (Macrococcoides caseolyticum).